A 381-amino-acid chain; its full sequence is Succinyl-diaminopimelate desuccinylase (381 aa).

H68 is a Zn(2+) binding site. The active site involves D70. D101 contacts Zn(2+). E135 (proton acceptor) is an active-site residue. Positions 136, 164, and 350 each coordinate Zn(2+).

This sequence belongs to the peptidase M20A family. DapE subfamily. In terms of assembly, homodimer. Zn(2+) serves as cofactor. Requires Co(2+) as cofactor.

It catalyses the reaction N-succinyl-(2S,6S)-2,6-diaminopimelate + H2O = (2S,6S)-2,6-diaminopimelate + succinate. Its pathway is amino-acid biosynthesis; L-lysine biosynthesis via DAP pathway; LL-2,6-diaminopimelate from (S)-tetrahydrodipicolinate (succinylase route): step 3/3. Catalyzes the hydrolysis of N-succinyl-L,L-diaminopimelic acid (SDAP), forming succinate and LL-2,6-diaminopimelate (DAP), an intermediate involved in the bacterial biosynthesis of lysine and meso-diaminopimelic acid, an essential component of bacterial cell walls. The sequence is that of Succinyl-diaminopimelate desuccinylase from Neisseria meningitidis serogroup C (strain 053442).